Reading from the N-terminus, the 485-residue chain is uncharacterized protein (485 aa).

The signal sequence occupies residues 1–23 (MRRRVCTVVRAVVCLLSTSLLTT). Cys-24 carries the N-palmitoyl cysteine lipid modification. Cys-24 carries the S-diacylglycerol cysteine lipid modification. Over residues 308–327 (SAASSPAQCPSSPSSSSSSS) the composition is skewed to low complexity. Residues 308-331 (SAASSPAQCPSSPSSSSSSSTNAG) are disordered.

The protein belongs to the TP013X lipoprotein family.

It is found in the cell membrane. This is an uncharacterized protein from Treponema pallidum (strain Nichols).